A 256-amino-acid chain; its full sequence is Ribonuclease 3 (256 aa).

Residues Leu3 to Gly125 enclose the RNase III domain. Glu38 is a binding site for Mg(2+). Asp42 is an active-site residue. The Mg(2+) site is built by Asp111 and Glu114. The active site involves Glu114. The 71-residue stretch at Asp152–Lys222 folds into the DRBM domain. A disordered region spans residues Arg230–Glu256.

It belongs to the ribonuclease III family. In terms of assembly, homodimer. Mg(2+) serves as cofactor.

It is found in the cytoplasm. It carries out the reaction Endonucleolytic cleavage to 5'-phosphomonoester.. Its function is as follows. Digests double-stranded RNA. Involved in the processing of primary rRNA transcript to yield the immediate precursors to the large and small rRNAs (23S and 16S). Processes some mRNAs, and tRNAs when they are encoded in the rRNA operon. Processes pre-crRNA and tracrRNA of type II CRISPR loci if present in the organism. In Cupriavidus necator (strain ATCC 17699 / DSM 428 / KCTC 22496 / NCIMB 10442 / H16 / Stanier 337) (Ralstonia eutropha), this protein is Ribonuclease 3.